The chain runs to 102 residues: P antigen family member 4 (102 aa).

Positions 1-10 are enriched in basic residues; the sequence is MSARVRSRSR. Residues 1 to 102 are disordered; it reads MSARVRSRSR…KTKEAGDGQP (102 aa). Ser7 carries the post-translational modification Phosphoserine; by CLK2. Ser9 bears the Phosphoserine; by HIPK1 and CLK2 mark. Residues 45 to 85 are compositionally biased toward basic and acidic residues; that stretch reads GQEREGTPPIEERKVEGDCQEMDLEKTRSERGDGSDVKEKT. Thr51 is subject to Phosphothreonine; by HIPK1 and CLK2. Phosphothreonine; by CLK2 is present on Thr71. Residues Ser73 and Ser79 each carry the phosphoserine; by CLK2 modification. Phosphothreonine; by CLK2 occurs at positions 85 and 94.

Belongs to the GAGE family. As to quaternary structure, interacts with JUN. In terms of processing, HIPK1-mediated phosphorylation at Thr-51 leads to the compaction of its intrinsically disordered conformation and is critical for its ability to potentiate the transcriptional activator activity of JUN inspite of a reduced interaction with JUN. CLK2-mediated phosphorylation at multiple Ser and Thr residues attenuates its ability to potentiate JUN transcriptional activator activity. Expressed at basal lvels in the adult normal prostate gland but is highly up-regulated in the fetal prostate and prostate cancer cells. Preferentially expressed in normal male and female reproductive tissues, testis, fallopian tube, uterus, and placenta, as well as in testicular cancer, uterine cancer, cervical cancer and kidney cancer.

Its subcellular location is the cytoplasm. The protein resides in the nucleus. It is found in the mitochondrion. Its function is as follows. Intrinsically disordered protein that potentiates the transcriptional activator activity of JUN. Protects cells from stress-induced apoptosis by inhibiting reactive oxygen species (ROS) production and via regulation of the MAPK signaling pathway. The chain is P antigen family member 4 (PAGE4) from Homo sapiens (Human).